We begin with the raw amino-acid sequence, 258 residues long: Phosphoribosylformylglycinamidine synthase subunit PurQ (258 aa).

The Glutamine amidotransferase type-1 domain occupies 7–238; sequence IGILLMEGTN…QAMYLETEKD (232 aa). The active-site Nucleophile is the Cys-97. Residues His-220 and Glu-222 contribute to the active site.

In terms of assembly, part of the FGAM synthase complex composed of 1 PurL, 1 PurQ and 2 PurS subunits.

It localises to the cytoplasm. The catalysed reaction is N(2)-formyl-N(1)-(5-phospho-beta-D-ribosyl)glycinamide + L-glutamine + ATP + H2O = 2-formamido-N(1)-(5-O-phospho-beta-D-ribosyl)acetamidine + L-glutamate + ADP + phosphate + H(+). It catalyses the reaction L-glutamine + H2O = L-glutamate + NH4(+). Its pathway is purine metabolism; IMP biosynthesis via de novo pathway; 5-amino-1-(5-phospho-D-ribosyl)imidazole from N(2)-formyl-N(1)-(5-phospho-D-ribosyl)glycinamide: step 1/2. Functionally, part of the phosphoribosylformylglycinamidine synthase complex involved in the purines biosynthetic pathway. Catalyzes the ATP-dependent conversion of formylglycinamide ribonucleotide (FGAR) and glutamine to yield formylglycinamidine ribonucleotide (FGAM) and glutamate. The FGAM synthase complex is composed of three subunits. PurQ produces an ammonia molecule by converting glutamine to glutamate. PurL transfers the ammonia molecule to FGAR to form FGAM in an ATP-dependent manner. PurS interacts with PurQ and PurL and is thought to assist in the transfer of the ammonia molecule from PurQ to PurL. This Thermoplasma volcanium (strain ATCC 51530 / DSM 4299 / JCM 9571 / NBRC 15438 / GSS1) protein is Phosphoribosylformylglycinamidine synthase subunit PurQ.